Reading from the N-terminus, the 250-residue chain is tRNA (guanine-N(1)-)-methyltransferase (250 aa).

S-adenosyl-L-methionine contacts are provided by residues G116 and 136-141 (IGDYVL).

It belongs to the RNA methyltransferase TrmD family. Homodimer.

Its subcellular location is the cytoplasm. It catalyses the reaction guanosine(37) in tRNA + S-adenosyl-L-methionine = N(1)-methylguanosine(37) in tRNA + S-adenosyl-L-homocysteine + H(+). Specifically methylates guanosine-37 in various tRNAs. The polypeptide is tRNA (guanine-N(1)-)-methyltransferase (Pseudomonas syringae pv. tomato (strain ATCC BAA-871 / DC3000)).